Here is a 267-residue protein sequence, read N- to C-terminus: MTRVNIGIVGCLGKQGRRLVSEISASPYAQVSGGLVRSGNPHVGQILGEVVGCDCSVKITDSLEHLFETSDIVIEFTNPDMLLECIKMAEQKKKPLLSGTTGPAATEMVFEDYIKSIPFLWTTNVSFGVNILAKLVQEAAKKLFDYDIEIWEMHHRYKKDSPSGTSLILGKAAAKGRNVPFQMAQYVRGTPQEARKDVNTIGYSVSRGGADLSDHRVMFVSDEEMIDFNHRTLNKNLYAKGALKAALWLVKQPPGVYTMSDMMAAVE.

Position 10 to 15 (10 to 15) interacts with NAD(+); sequence GCLGKQ. Residue Arg-37 participates in NADP(+) binding. Residues 99 to 101 and 122 to 125 each bind NAD(+); these read GTT and TTNV. The Proton donor/acceptor role is filled by His-154. His-155 serves as a coordination point for (S)-2,3,4,5-tetrahydrodipicolinate. The Proton donor role is filled by Lys-158. 164-165 is a (S)-2,3,4,5-tetrahydrodipicolinate binding site; sequence GT.

The protein belongs to the DapB family.

It localises to the cytoplasm. It catalyses the reaction (S)-2,3,4,5-tetrahydrodipicolinate + NAD(+) + H2O = (2S,4S)-4-hydroxy-2,3,4,5-tetrahydrodipicolinate + NADH + H(+). It carries out the reaction (S)-2,3,4,5-tetrahydrodipicolinate + NADP(+) + H2O = (2S,4S)-4-hydroxy-2,3,4,5-tetrahydrodipicolinate + NADPH + H(+). Its pathway is amino-acid biosynthesis; L-lysine biosynthesis via DAP pathway; (S)-tetrahydrodipicolinate from L-aspartate: step 4/4. Its function is as follows. Catalyzes the conversion of 4-hydroxy-tetrahydrodipicolinate (HTPA) to tetrahydrodipicolinate. The sequence is that of 4-hydroxy-tetrahydrodipicolinate reductase from Ehrlichia chaffeensis (strain ATCC CRL-10679 / Arkansas).